Reading from the N-terminus, the 82-residue chain is Small ribosomal subunit protein bS16 (82 aa).

Belongs to the bacterial ribosomal protein bS16 family.

The protein is Small ribosomal subunit protein bS16 of Saccharophagus degradans (strain 2-40 / ATCC 43961 / DSM 17024).